The following is a 346-amino-acid chain: Tyrosine--tRNA ligase (346 aa).

A 'HIGH' region motif is present at residues 47–56 (PSGRIHIAQA). Positions 230–234 (KMSKS) match the 'KMSKS' region motif. Lysine 233 provides a ligand contact to ATP.

The protein belongs to the class-I aminoacyl-tRNA synthetase family. In terms of assembly, homodimer.

It catalyses the reaction tRNA(Tyr) + L-tyrosine + ATP = L-tyrosyl-tRNA(Tyr) + AMP + diphosphate + H(+). Functionally, catalyzes the attachment of tyrosine to tRNA(Tyr) in a two-step reaction: tyrosine is first activated by ATP to form Tyr-AMP and then transferred to the acceptor end of tRNA(Tyr). The sequence is that of Tyrosine--tRNA ligase (YARS) from Acanthamoeba polyphaga (Amoeba).